Here is a 186-residue protein sequence, read N- to C-terminus: Potassium-transporting ATPase KdpC subunit (186 aa).

A helical membrane pass occupies residues 10-30 (LTIITMVLCGFLFPLAITLIG).

This sequence belongs to the KdpC family. In terms of assembly, the system is composed of three essential subunits: KdpA, KdpB and KdpC.

It localises to the cell membrane. Part of the high-affinity ATP-driven potassium transport (or Kdp) system, which catalyzes the hydrolysis of ATP coupled with the electrogenic transport of potassium into the cytoplasm. This subunit acts as a catalytic chaperone that increases the ATP-binding affinity of the ATP-hydrolyzing subunit KdpB by the formation of a transient KdpB/KdpC/ATP ternary complex. The chain is Potassium-transporting ATPase KdpC subunit from Staphylococcus aureus (strain MRSA252).